The primary structure comprises 88 residues: Elongation factor 1-beta (88 aa).

Belongs to the EF-1-beta/EF-1-delta family.

Promotes the exchange of GDP for GTP in EF-1-alpha/GDP, thus allowing the regeneration of EF-1-alpha/GTP that could then be used to form the ternary complex EF-1-alpha/GTP/AAtRNA. The chain is Elongation factor 1-beta from Methanosphaera stadtmanae (strain ATCC 43021 / DSM 3091 / JCM 11832 / MCB-3).